The following is a 518-amino-acid chain: Protein translocase subunit SecD (518 aa).

The next 6 helical transmembrane spans lie at 9-29 (IVLS…NFIQ), 356-376 (GKKA…LSYG), 377-397 (VIGL…LALL), 406-426 (LPGI…NVLI), 463-483 (LIVA…FAVA), and 486-506 (IGII…IDVW).

Belongs to the SecD/SecF family. SecD subfamily. As to quaternary structure, forms a complex with SecF. Part of the essential Sec protein translocation apparatus which comprises SecA, SecYEG and auxiliary proteins SecDF-YajC and YidC.

The protein localises to the cell inner membrane. Part of the Sec protein translocase complex. Interacts with the SecYEG preprotein conducting channel. SecDF uses the proton motive force (PMF) to complete protein translocation after the ATP-dependent function of SecA. The sequence is that of Protein translocase subunit SecD from Rickettsia prowazekii (strain Madrid E).